Consider the following 179-residue polypeptide: UPF0303 protein YBR137W (179 aa).

It belongs to the UPF0303 family.

Its subcellular location is the cytoplasm. The sequence is that of UPF0303 protein YBR137W from Saccharomyces cerevisiae (strain ATCC 204508 / S288c) (Baker's yeast).